We begin with the raw amino-acid sequence, 205 residues long: Lymphotoxin-alpha (205 aa).

The N-terminal stretch at 1–34 (MTPPERLFLPRVCGTTLHLLLLGLLLVLLPGAQG) is a signal peptide. Thr41 is a glycosylation site (O-linked (GalNAc...) threonine; partial). One can recognise a THD domain in the interval 63–205 (PAAHLIGDPS…STVFFGAFAL (143 aa)). Residue Asn96 is glycosylated (N-linked (GlcNAc...) asparagine).

This sequence belongs to the tumor necrosis factor family. In terms of assembly, homotrimer, and heterotrimer of either two LTB and one LTA subunits or (less prevalent) two LTA and one LTB subunits. Interacts with TNFRSF14.

The protein localises to the secreted. It localises to the membrane. Functionally, cytokine that in its homotrimeric form binds to TNFRSF1A/TNFR1, TNFRSF1B/TNFBR and TNFRSF14/HVEM. In its heterotrimeric form with LTB binds to TNFRSF3/LTBR. Lymphotoxin is produced by lymphocytes and is cytotoxic for a wide range of tumor cells in vitro and in vivo. The sequence is that of Lymphotoxin-alpha (LTA) from Homo sapiens (Human).